The sequence spans 185 residues: Ribosome-recycling factor (185 aa).

The protein belongs to the RRF family.

The protein resides in the cytoplasm. Responsible for the release of ribosomes from messenger RNA at the termination of protein biosynthesis. May increase the efficiency of translation by recycling ribosomes from one round of translation to another. This is Ribosome-recycling factor from Saccharophagus degradans (strain 2-40 / ATCC 43961 / DSM 17024).